Consider the following 186-residue polypeptide: Oligoribonuclease (186 aa).

In terms of domain architecture, Exonuclease spans 8 to 171 (LIWIDLEMTG…DDIRESIAEL (164 aa)). Tyrosine 129 is an active-site residue.

This sequence belongs to the oligoribonuclease family.

The protein localises to the cytoplasm. Its function is as follows. 3'-to-5' exoribonuclease specific for small oligoribonucleotides. The sequence is that of Oligoribonuclease from Mannheimia succiniciproducens (strain KCTC 0769BP / MBEL55E).